The following is a 389-amino-acid chain: Alkanesulfonate monooxygenase (389 aa).

The protein belongs to the SsuD family.

It carries out the reaction an alkanesulfonate + FMNH2 + O2 = an aldehyde + FMN + sulfite + H2O + 2 H(+). Catalyzes the desulfonation of aliphatic sulfonates. The chain is Alkanesulfonate monooxygenase from Agrobacterium fabrum (strain C58 / ATCC 33970) (Agrobacterium tumefaciens (strain C58)).